The following is a 335-amino-acid chain: Glyceraldehyde-3-phosphate dehydrogenase 2 (335 aa).

NAD(+) is bound by residues 13 to 14, Asp35, and Arg80; that span reads RI. Phosphoserine occurs at positions 125 and 151. 151-153 lines the D-glyceraldehyde 3-phosphate pocket; the sequence is SCT. Residue Cys152 is the Nucleophile of the active site. A phosphothreonine mark is found at Thr153, Thr154, Thr182, and Thr184. Thr182 contacts D-glyceraldehyde 3-phosphate. A phosphoserine mark is found at Ser192, Ser203, and Ser209. Thr211 carries the post-translational modification Phosphothreonine. Residues 211–212 and Arg234 contribute to the D-glyceraldehyde 3-phosphate site; that span reads TG. Thr237 carries the phosphothreonine modification. Ser241 carries the phosphoserine modification. Asn316 serves as a coordination point for NAD(+).

It belongs to the glyceraldehyde-3-phosphate dehydrogenase family. As to quaternary structure, homotetramer.

It is found in the cytoplasm. It carries out the reaction D-glyceraldehyde 3-phosphate + phosphate + NAD(+) = (2R)-3-phospho-glyceroyl phosphate + NADH + H(+). The protein operates within carbohydrate degradation; glycolysis; pyruvate from D-glyceraldehyde 3-phosphate: step 1/5. In Schizosaccharomyces pombe (strain 972 / ATCC 24843) (Fission yeast), this protein is Glyceraldehyde-3-phosphate dehydrogenase 2 (gpd3).